Reading from the N-terminus, the 597-residue chain is MKNIRNFSIIAHIDHGKSTLADRFIQYCGGLDLREMSTQVLDSMDIEKERGITIKAQTAALNYKARDGQVYQLNLIDTPGHVDFSYEVSRSLSACEGALLVVDASQGVEAQTVANCYTAIDLGVEVVPVLNKIDLPAADPERVEQEIEDIIGIDAVGAVQCSAKSGIGVEDVLEEIVAKIPAPTGDENAPLQAVIVDSWFDNYVGVVMLIRVKNGTIKLKDKVRFMSTKAETQVEQLGVFTPKSVQKQELKAGEVGFLITGVKELGQAKVGDTVTLVANPATEPLPGFQEVQSQVFAGLYPVESHDYEALRDALEKLQLNDASLKFEPEVSQALGFGFRCGFLGLLHLEIVQERLEREFDMDLITTAPTVVYEVVLKNGEKIEVENPSKLPDIGSIETILEPIITATILVPQEYVGNVMTLCNQKRGVQVNMQYMGRQVMLTYDLPMNEVVMDFFDKLKSTSRGYASLDYHFKEFQPSDLIKLDIMVNGEKVDALSLIVHRQSAVHRGRELASKMRELIPRQMFDIAVQAAIGSQIIARENVKALRKNVLAKCYGGDITRKKKLLEKQKAGKRRMKQVGNVEIPQSAFLAILQVSDK.

Residues 2–184 form the tr-type G domain; the sequence is KNIRNFSIIA…EIVAKIPAPT (183 aa). Residues 14–19 and 131–134 each bind GTP; these read DHGKST and NKID.

This sequence belongs to the TRAFAC class translation factor GTPase superfamily. Classic translation factor GTPase family. LepA subfamily.

It is found in the cell inner membrane. It catalyses the reaction GTP + H2O = GDP + phosphate + H(+). Its function is as follows. Required for accurate and efficient protein synthesis under certain stress conditions. May act as a fidelity factor of the translation reaction, by catalyzing a one-codon backward translocation of tRNAs on improperly translocated ribosomes. Back-translocation proceeds from a post-translocation (POST) complex to a pre-translocation (PRE) complex, thus giving elongation factor G a second chance to translocate the tRNAs correctly. Binds to ribosomes in a GTP-dependent manner. The protein is Elongation factor 4 of Neisseria meningitidis serogroup C (strain 053442).